The primary structure comprises 160 residues: Transcription elongation factor GreA (160 aa).

Residues 10–37 (TLEGKAKLENELQELKTVKRKEVVERIK) are a coiled coil.

The protein belongs to the GreA/GreB family.

Necessary for efficient RNA polymerase transcription elongation past template-encoded arresting sites. The arresting sites in DNA have the property of trapping a certain fraction of elongating RNA polymerases that pass through, resulting in locked ternary complexes. Cleavage of the nascent transcript by cleavage factors such as GreA or GreB allows the resumption of elongation from the new 3'terminus. GreA releases sequences of 2 to 3 nucleotides. The protein is Transcription elongation factor GreA of Listeria welshimeri serovar 6b (strain ATCC 35897 / DSM 20650 / CCUG 15529 / CIP 8149 / NCTC 11857 / SLCC 5334 / V8).